A 1304-amino-acid polypeptide reads, in one-letter code: DNA-directed RNA polymerase subunit beta' (1304 aa).

Zn(2+) is bound by residues cysteine 60, cysteine 62, cysteine 75, and cysteine 78. The Mg(2+) site is built by aspartate 541, aspartate 543, and aspartate 545. The Zn(2+) site is built by cysteine 887, cysteine 963, cysteine 970, and cysteine 973.

It belongs to the RNA polymerase beta' chain family. In terms of assembly, the RNAP catalytic core consists of 2 alpha, 1 beta, 1 beta' and 1 omega subunit. When a sigma factor is associated with the core the holoenzyme is formed, which can initiate transcription. Mg(2+) serves as cofactor. Zn(2+) is required as a cofactor.

The enzyme catalyses RNA(n) + a ribonucleoside 5'-triphosphate = RNA(n+1) + diphosphate. DNA-dependent RNA polymerase catalyzes the transcription of DNA into RNA using the four ribonucleoside triphosphates as substrates. The protein is DNA-directed RNA polymerase subunit beta' of Acidothermus cellulolyticus (strain ATCC 43068 / DSM 8971 / 11B).